The sequence spans 27 residues: Trypsin inhibitor 1 (27 aa).

Homodimer. In terms of processing, contains disulfide bonds. Post-translationally, glycosylated.

Inhibits trypsin (IC(50)=1.25 uM) but not chymotrypsin or papain. Has antibacterial activity against S.enterica ATCC 10708 (MIC=5 ug/ml) and S.aureus ATCC 25923 (MIC=5 ug/ml) but not against B.subtilis ATCC 6633 or P.aeruginosa ATCC 25619. Has no hemolytic activity against human erythrocytes. Is not toxic to mice. The chain is Trypsin inhibitor 1 from Jatropha curcas (Barbados nut).